An 886-amino-acid chain; its full sequence is Microsomal triglyceride transfer protein (886 aa).

The first 24 residues, 1 to 24 (MLRLAGLLLCVTSFLSTSSLGANA), serve as a signal peptide directing secretion. Residues 28 to 662 (LDNDRLYRYS…QSNNALLHGL (635 aa)) form the Vitellogenin domain. Disulfide bonds link C174–C194 and C440–C445.

In terms of assembly, heterodimer; heterodimerizes with the protein disulfide isomerase. Interacts with apolipoprotein B.

Its subcellular location is the endoplasmic reticulum. Catalyzes the transport of triglyceride, cholesteryl ester, and phospholipid between phospholipid surfaces. Required for the secretion of plasma lipoproteins that contain apolipoprotein B. The polypeptide is Microsomal triglyceride transfer protein (Megalobrama amblycephala (Chinese blunt snout bream)).